The following is a 133-amino-acid chain: Small ribosomal subunit protein uS8 (133 aa).

A disordered region spans residues 1 to 32 (MANHDPISDMLTRIRNASEKRHESTKVPASRM). The span at 16-25 (NASEKRHEST) shows a compositional bias: basic and acidic residues.

It belongs to the universal ribosomal protein uS8 family. Part of the 30S ribosomal subunit. Contacts proteins S5 and S12.

Functionally, one of the primary rRNA binding proteins, it binds directly to 16S rRNA central domain where it helps coordinate assembly of the platform of the 30S subunit. The protein is Small ribosomal subunit protein uS8 of Synechococcus sp. (strain CC9311).